Reading from the N-terminus, the 150-residue chain is Large ribosomal subunit protein uL13 (150 aa).

The protein belongs to the universal ribosomal protein uL13 family. Part of the 50S ribosomal subunit.

In terms of biological role, this protein is one of the early assembly proteins of the 50S ribosomal subunit, although it is not seen to bind rRNA by itself. It is important during the early stages of 50S assembly. This chain is Large ribosomal subunit protein uL13, found in Sulfurihydrogenibium sp. (strain YO3AOP1).